Here is a 440-residue protein sequence, read N- to C-terminus: MAKPIVAIVGRPNVGKSTLFNKIIGHRISIVEDQPGVTRDRIYAEVEWLDHYFTLIDTGGIDADTEEIIPAQMREQAQLAIETADVTVFMVDGRAGLTTSDREVAEMLRKSHKPVLLAMNKVDTSNRLDSFYEFYELGIGDPIEISSAQGLGIGDLLDEIVKHFPENKGVIYDDDVIKVAIIGKPNVGKSSIVNSILGENRVIVSDIAGTTRDAIDTPFNDGEDQYVLIDTAGLRRKSKIKENIEKYSVIRSIAAVERADVCLLVIDATEGVTEQDTKVAGFSHENGKGTIIVVNKWDLIEKDNNTMNKFIKEIRTELAYLSYAPILFISALTRQRMPKVLETVKFISNQRAMRVPTGGLNEVIGEATLLNQPPSDKGKRLKIFYGTQGSIKPPTFVLFINDKKLMHFSYERYIENRIRENFGFEGTPIRFIYREKSGRD.

EngA-type G domains lie at 4-168 (PIVA…PENK) and 177-352 (IKVA…NQRA). GTP contacts are provided by residues 10 to 17 (GRPNVGKS), 57 to 61 (DTGGI), 120 to 123 (NKVD), 183 to 190 (GKPNVGKS), 230 to 234 (DTAGL), and 295 to 298 (NKWD). The KH-like domain occupies 353–437 (MRVPTGGLNE…PIRFIYREKS (85 aa)).

The protein belongs to the TRAFAC class TrmE-Era-EngA-EngB-Septin-like GTPase superfamily. EngA (Der) GTPase family. In terms of assembly, associates with the 50S ribosomal subunit.

Its function is as follows. GTPase that plays an essential role in the late steps of ribosome biogenesis. This is GTPase Der from Alkaliphilus metalliredigens (strain QYMF).